The chain runs to 120 residues: Large ribosomal subunit protein bL19 (120 aa).

The protein belongs to the bacterial ribosomal protein bL19 family.

In terms of biological role, this protein is located at the 30S-50S ribosomal subunit interface and may play a role in the structure and function of the aminoacyl-tRNA binding site. The polypeptide is Large ribosomal subunit protein bL19 (Dichelobacter nodosus (strain VCS1703A)).